A 309-amino-acid polypeptide reads, in one-letter code: Ornithine carbamoyltransferase (309 aa).

Carbamoyl phosphate is bound by residues 56 to 59 (STRT), Gln83, Arg107, and 134 to 137 (HPCQ). Residues Asn165, Asp223, and 227 to 228 (SM) each bind L-ornithine. Residues 263–264 (CL) and Arg291 contribute to the carbamoyl phosphate site.

Belongs to the aspartate/ornithine carbamoyltransferase superfamily. OTCase family.

Its subcellular location is the cytoplasm. The enzyme catalyses carbamoyl phosphate + L-ornithine = L-citrulline + phosphate + H(+). It functions in the pathway amino-acid biosynthesis; L-arginine biosynthesis; L-arginine from L-ornithine and carbamoyl phosphate: step 1/3. In terms of biological role, reversibly catalyzes the transfer of the carbamoyl group from carbamoyl phosphate (CP) to the N(epsilon) atom of ornithine (ORN) to produce L-citrulline. This is Ornithine carbamoyltransferase from Burkholderia cenocepacia (strain HI2424).